The primary structure comprises 671 residues: Carbohydrate acetyl esterase/feruloyl esterase (671 aa).

A signal peptide spans 1–24 (MYQSTLKTILLASALLILPASMSA). Residues 1–296 (MYQSTLKTIL…YGEAVARHLG (296 aa)) form a carbohydrate acetyl esterase region. Residues Ser55, Asp271, and His274 each act as for acetyl esterase activity in the active site. A feruloyl esterase region spans residues 297 to 671 (YEPKRPYIEM…NEFIPHLFKK (375 aa)).

This sequence in the N-terminal section; belongs to the carbohydrate esterase 6 family.

The enzyme catalyses feruloyl-polysaccharide + H2O = ferulate + polysaccharide.. The protein operates within glycan degradation; xylan degradation. Involved in degradation of plant cell wall polysaccharides. Bifunctional esterase that possesses both acetyl esterase and ferulic acid esterase activities. Has deacetylase activity towards acetylated xylo-oligosaccharides smaller than xylo-heptaose, as well as from glucose-pentaacetate. Is also able to release ferulic acid from methylferulate, and from the more natural substrates wheat bran, corn fiber, and XOS(FA,Ac), a corn fiber-derived substrate enriched in O-acetyl and ferulic acid esters. The polypeptide is Carbohydrate acetyl esterase/feruloyl esterase (Xylanibacter ruminicola (strain ATCC 19189 / DSM 19721 / CIP 105475 / JCM 8958 / 23) (Prevotella ruminicola)).